A 231-amino-acid chain; its full sequence is Aquaporin Z (231 aa).

The next 2 helical transmembrane spans lie at 9 to 29 (CFGTFWLVFGGCGSAVLAAGF) and 34 to 54 (IGFAGVALAFGLTVLTMAFAV). The NPA 1 motif lies at 63–65 (NPA). Transmembrane regions (helical) follow at residues 82-102 (VGYVIAQVVGGIVAAALLYLI), 129-149 (YSMLSALVVELVLSAGFLLVI), and 156-176 (FAPAGFAPIAIGLALTLIHLI). The short motif at 186–188 (NPA) is the NPA 2 element. Residues 202-222 (LEQLWFFWVVPIVGGIIGGLI) form a helical membrane-spanning segment.

The protein belongs to the MIP/aquaporin (TC 1.A.8) family. Homotetramer.

The protein resides in the cell inner membrane. It catalyses the reaction H2O(in) = H2O(out). Channel that permits osmotically driven movement of water in both directions. It is involved in the osmoregulation and in the maintenance of cell turgor during volume expansion in rapidly growing cells. It mediates rapid entry or exit of water in response to abrupt changes in osmolarity. The sequence is that of Aquaporin Z from Escherichia coli O6:H1 (strain CFT073 / ATCC 700928 / UPEC).